A 523-amino-acid polypeptide reads, in one-letter code: UDP-glucuronosyltransferase 3A1 (523 aa).

The first 23 residues, 1-23 (MAVGRKSLILSLLIQHFVLLHGA), serve as a signal peptide directing secretion. At 24-483 (KILTVCFLGG…YSYQQPLYQQ (460 aa)) the chain is on the extracellular side. N-linked (GlcNAc...) asparagine glycosylation occurs at N125. Residues 484–504 (YLLDVFLFVCVCVIGACYLTV) form a helical membrane-spanning segment. At 505-523 (KLLKMFIQKLCSFRKLKQN) the chain is on the cytoplasmic side.

This sequence belongs to the UDP-glycosyltransferase family.

It localises to the membrane. It catalyses the reaction glucuronate acceptor + UDP-alpha-D-glucuronate = acceptor beta-D-glucuronoside + UDP + H(+). Functionally, UDP-glucuronosyltransferases catalyze phase II biotransformation reactions in which lipophilic substrates are conjugated with glucuronic acid to increase water solubility and enhance excretion. They are of major importance in the conjugation and subsequent elimination of potentially toxic xenobiotics and endogenous compounds. This Xenopus laevis (African clawed frog) protein is UDP-glucuronosyltransferase 3A1 (ugt3a1).